The sequence spans 148 residues: NADH-quinone oxidoreductase subunit K 2 (148 aa).

3 helical membrane passes run leucine 3 to alanine 23, isoleucine 28 to phenylalanine 48, and leucine 64 to valine 84. Residues leucine 96–arginine 148 are disordered.

Belongs to the complex I subunit 4L family. As to quaternary structure, NDH-1 is composed of 14 different subunits. Subunits NuoA, H, J, K, L, M, N constitute the membrane sector of the complex.

It localises to the cell membrane. The catalysed reaction is a quinone + NADH + 5 H(+)(in) = a quinol + NAD(+) + 4 H(+)(out). NDH-1 shuttles electrons from NADH, via FMN and iron-sulfur (Fe-S) centers, to quinones in the respiratory chain. The immediate electron acceptor for the enzyme in this species is believed to be a menaquinone. Couples the redox reaction to proton translocation (for every two electrons transferred, four hydrogen ions are translocated across the cytoplasmic membrane), and thus conserves the redox energy in a proton gradient. The chain is NADH-quinone oxidoreductase subunit K 2 from Streptomyces griseus subsp. griseus (strain JCM 4626 / CBS 651.72 / NBRC 13350 / KCC S-0626 / ISP 5235).